Reading from the N-terminus, the 343-residue chain is Chlorophyll(ide) b reductase NOL, chloroplastic (343 aa).

The N-terminal 54 residues, 1–54, are a transit peptide targeting the chloroplast; the sequence is MAATAAYLPLRAQAQVGLAPLRPSGSAAAGARLPGRTARRRLAARGGPEAAGIR. An NAD(+)-binding site is contributed by 78 to 102; the sequence is ITGSTKGIGYALAKEFLKAGDNVVI. Residue Tyr228 is the Proton acceptor of the active site.

It belongs to the short-chain dehydrogenases/reductases (SDR) family. As to quaternary structure, interacts with NCY1 to form a complex that acts as a chlorophyll b reductase. As to expression, expressed in leaves and stems. Also detected in non-photosynthetic tissues such as roots.

The protein resides in the plastid. The protein localises to the chloroplast thylakoid membrane. The catalysed reaction is 7(1)-hydroxychlorophyllide a + NAD(+) = chlorophyllide b + NADH + H(+). It catalyses the reaction 7(1)-hydroxychlorophyllide a + NADP(+) = chlorophyllide b + NADPH + H(+). Functionally, required for chlorophyll b degradation. In Oryza sativa subsp. japonica (Rice), this protein is Chlorophyll(ide) b reductase NOL, chloroplastic (NOL).